The sequence spans 226 residues: Gap junction beta-2 protein (226 aa).

Residues 2–13 lie within the membrane without spanning it; that stretch reads DWGTLQTILGGV. At 14 to 20 the chain is on the cytoplasmic side; sequence NKHSTSI. A helical transmembrane segment spans residues 21–40; it reads GKIWLTVLFIFRIMILVVAA. The Extracellular portion of the chain corresponds to 41-73; the sequence is KEVWGDEQADFVCNTLQPGCKNVCYDHYFPISH. Ca(2+)-binding residues include Glu-42, Gly-45, and Glu-47. 3 cysteine pairs are disulfide-bonded: Cys-53–Cys-180, Cys-60–Cys-174, and Cys-64–Cys-169. A helical membrane pass occupies residues 74-94; the sequence is IRLWALQLIFVSTPALLVAMH. Residues 95 to 135 are Cytoplasmic-facing; that stretch reads VAYRRHEKKRKFIKGEIKSEFKDIEEIKTQKVRIEGSLWWT. The helical transmembrane segment at 136–156 threads the bilayer; the sequence is YTSSIFFRVIFEAAFMYVFYV. Over 157–189 the chain is Extracellular; the sequence is MYDGFSMQRLVKCNAWPCPNTVDCFVSRPTEKT. The chain crosses the membrane as a helical span at residues 190–210; sequence VFTVFMIAVSGICILLNVTEL. At 211–226 the chain is on the cytoplasmic side; that stretch reads CYLLIRYCSGKSKKPV.

It belongs to the connexin family. Beta-type (group I) subfamily. As to quaternary structure, a hemichannel or connexon is composed of a hexamer of connexins. A functional gap junction is formed by the apposition of two hemichannels. Forms heteromeric channels with GJB4. Interacts with CNST.

The protein localises to the cell membrane. Its subcellular location is the cell junction. The protein resides in the gap junction. Functionally, structural component of gap junctions. Gap junctions are dodecameric channels that connect the cytoplasm of adjoining cells. They are formed by the docking of two hexameric hemichannels, one from each cell membrane. Small molecules and ions diffuse from one cell to a neighboring cell via the central pore. The chain is Gap junction beta-2 protein (GJB2) from Gorilla gorilla gorilla (Western lowland gorilla).